The sequence spans 891 residues: Nitrate reductase [NAD(P)H] (891 aa).

Residues 1–78 (MAASVEYNRQ…VKDPRDEATS (78 aa)) form a disordered region. Residues 63–76 (LDVEPSVKDPRDEA) are compositionally biased toward basic and acidic residues. Cys168 contributes to the Mo-molybdopterin binding site. Positions 515–590 (SAQFTMSEVR…LEMYRVGELI (76 aa)) constitute a Cytochrome b5 heme-binding domain. Heme-binding residues include His550 and His573. The region spanning 630 to 742 (REKVRCRLVD…KGPVGHIEYA (113 aa)) is the FAD-binding FR-type domain. FAD contacts are provided by residues 682-685 (RAYT), 699-703 (LIKIY), Phe704, Phe711, 716-718 (LMS), and Thr769.

This sequence belongs to the nitrate reductase family. In terms of assembly, homodimer. The cofactor is FAD. Heme is required as a cofactor. It depends on Mo-molybdopterin as a cofactor.

It catalyses the reaction nitrite + NAD(+) + H2O = nitrate + NADH + H(+). The catalysed reaction is nitrite + NADP(+) + H2O = nitrate + NADPH + H(+). Functionally, nitrate reductase is a key enzyme involved in the first step of nitrate assimilation in plants, fungi and bacteria. The chain is Nitrate reductase [NAD(P)H] (NAR-7) from Hordeum vulgare (Barley).